The sequence spans 194 residues: dCTP deaminase (194 aa).

DCTP contacts are provided by residues 110-115, Asp128, 136-138, Tyr171, Lys178, and Gln182; these read RSSLAR and VLE. The active-site Proton donor/acceptor is the Glu138.

This sequence belongs to the dCTP deaminase family. In terms of assembly, homotrimer.

The catalysed reaction is dCTP + H2O + H(+) = dUTP + NH4(+). It functions in the pathway pyrimidine metabolism; dUMP biosynthesis; dUMP from dCTP (dUTP route): step 1/2. In terms of biological role, catalyzes the deamination of dCTP to dUTP. This chain is dCTP deaminase, found in Mannheimia succiniciproducens (strain KCTC 0769BP / MBEL55E).